A 288-amino-acid chain; its full sequence is Polyisoprenoid diphosphate/phosphate phosphohydrolase PLPP6 (288 aa).

Residues 1-82 (MPSPKARSGS…STGGGGQQLP (82 aa)) are disordered. The Cytoplasmic portion of the chain corresponds to 1-127 (MPSPKARSGS…EDSSWGSVRP (127 aa)). Residues 128–148 (LMKLIEVSGHGIPWLAGAAYC) form a helical membrane-spanning segment. The Lumenal portion of the chain corresponds to 149–161 (LYKSDSPAGQEVM). The chain crosses the membrane as a helical span at residues 162–182 (LNLLMALVLDVVLVGVLKAVV). Positions 179–187 (KAVVRRRRP) are phosphatase sequence motif I. Over 183 to 223 (RRRRPAHNRMDMFATFSVDSYSFPSGHATRAAMCARFLLNH) the chain is Cytoplasmic. Positions 206–209 (PSGH) are phosphatase sequence motif II. The Proton donors role is filled by H209. A helical transmembrane segment spans residues 224–244 (LVLAAPLRVLVLLWATIVGFS). A phosphatase sequence motif III region spans residues 244–255 (SRVLLGRHNVTD). Over 245-255 (RVLLGRHNVTD) the chain is Lumenal. The active-site Nucleophile is H251. Residues 256 to 276 (VAFGFFMGYWQYNLVEMLWLS) form a helical membrane-spanning segment. The Cytoplasmic portion of the chain corresponds to 277 to 288 (PVMLQSAIGQLH).

It belongs to the PA-phosphatase related phosphoesterase family.

It localises to the endoplasmic reticulum membrane. Its subcellular location is the nucleus envelope. The protein localises to the nucleus inner membrane. The enzyme catalyses presqualene diphosphate + H2O = presqualene phosphate + phosphate + H(+). It catalyses the reaction presqualene phosphate + H2O = presqualene alcohol + phosphate. It carries out the reaction (2E,6E)-farnesyl diphosphate + H2O = (2E,6E)-farnesyl phosphate + phosphate + H(+). The catalysed reaction is (2E,6E)-farnesyl phosphate + H2O = (2E,6E)-farnesol + phosphate. The enzyme catalyses (2E,6E,10E)-geranylgeranyl diphosphate + H2O = (2E,6E,10E)-geranylgeranyl phosphate + phosphate + H(+). It catalyses the reaction (2E,6E,10E)-geranylgeranyl phosphate + H2O = (2E,6E,10E)-geranylgeraniol + phosphate. It carries out the reaction (2E)-geranyl diphosphate + H2O = (2E)-geranyl phosphate + phosphate + H(+). The catalysed reaction is (2E)-geranyl phosphate + H2O = (2E)-geraniol + phosphate. The enzyme catalyses 1,2-dihexadecanoyl-sn-glycero-3-phosphate + H2O = 1,2-dihexadecanoyl-sn-glycerol + phosphate. Its function is as follows. Magnesium-independent polyisoprenoid diphosphatase that catalyzes the sequential dephosphorylation of presqualene, farnesyl, geranyl and geranylgeranyl diphosphates. May regulate the biosynthesis of cholesterol and related sterols by dephosphorylating presqualene and farnesyl diphosphate, two key intermediates in this biosynthetic pathway. May also play a role in protein prenylation by acting on farnesyl diphosphate and its derivative geranylgeranyl diphosphate, two precursors for the addition of isoprenoid anchors to membrane proteins. Has a lower activity towards phosphatidic acid (PA), but through phosphatidic acid dephosphorylation may participate in the biosynthesis of phospholipids and triacylglycerols. May also act on ceramide-1-P, lysophosphatidic acid (LPA) and sphing-4-enine 1-phosphate/sphingosine-1-phosphate. The protein is Polyisoprenoid diphosphate/phosphate phosphohydrolase PLPP6 (plpp6) of Danio rerio (Zebrafish).